We begin with the raw amino-acid sequence, 345 residues long: S-adenosylmethionine:tRNA ribosyltransferase-isomerase (345 aa).

Belongs to the QueA family. As to quaternary structure, monomer.

Its subcellular location is the cytoplasm. It catalyses the reaction 7-aminomethyl-7-carbaguanosine(34) in tRNA + S-adenosyl-L-methionine = epoxyqueuosine(34) in tRNA + adenine + L-methionine + 2 H(+). The protein operates within tRNA modification; tRNA-queuosine biosynthesis. Its function is as follows. Transfers and isomerizes the ribose moiety from AdoMet to the 7-aminomethyl group of 7-deazaguanine (preQ1-tRNA) to give epoxyqueuosine (oQ-tRNA). This chain is S-adenosylmethionine:tRNA ribosyltransferase-isomerase, found in Helicobacter pylori (strain ATCC 700392 / 26695) (Campylobacter pylori).